The chain runs to 193 residues: Protein Syd (193 aa).

Belongs to the Syd family.

The protein localises to the cell inner membrane. Its function is as follows. Interacts with the SecY protein in vivo. May bind preferentially to an uncomplexed state of SecY, thus functioning either as a chelating agent for excess SecY in the cell or as a regulatory factor that negatively controls the translocase function. This Tolumonas auensis (strain DSM 9187 / NBRC 110442 / TA 4) protein is Protein Syd.